The chain runs to 49 residues: Large ribosomal subunit protein bL33B (49 aa).

The protein belongs to the bacterial ribosomal protein bL33 family.

This Lactobacillus delbrueckii subsp. bulgaricus (strain ATCC BAA-365 / Lb-18) protein is Large ribosomal subunit protein bL33B.